We begin with the raw amino-acid sequence, 114 residues long: Ribonuclease P protein component (114 aa).

Belongs to the RnpA family. In terms of assembly, consists of a catalytic RNA component (M1 or rnpB) and a protein subunit.

It carries out the reaction Endonucleolytic cleavage of RNA, removing 5'-extranucleotides from tRNA precursor.. Functionally, RNaseP catalyzes the removal of the 5'-leader sequence from pre-tRNA to produce the mature 5'-terminus. It can also cleave other RNA substrates such as 4.5S RNA. The protein component plays an auxiliary but essential role in vivo by binding to the 5'-leader sequence and broadening the substrate specificity of the ribozyme. This is Ribonuclease P protein component from Alkaliphilus oremlandii (strain OhILAs) (Clostridium oremlandii (strain OhILAs)).